We begin with the raw amino-acid sequence, 329 residues long: tRNA N6-adenosine threonylcarbamoyltransferase (329 aa).

Fe cation-binding residues include histidine 108, histidine 112, and tyrosine 129. Residues 129-133, aspartate 161, glutamate 182, and serine 261 contribute to the substrate site; that span reads YVSGG. A Fe cation-binding site is contributed by aspartate 289.

Belongs to the KAE1 / TsaD family. Fe(2+) serves as cofactor.

Its subcellular location is the cytoplasm. The enzyme catalyses L-threonylcarbamoyladenylate + adenosine(37) in tRNA = N(6)-L-threonylcarbamoyladenosine(37) in tRNA + AMP + H(+). Its function is as follows. Required for the formation of a threonylcarbamoyl group on adenosine at position 37 (t(6)A37) in tRNAs that read codons beginning with adenine. Is probably involved in the transfer of the threonylcarbamoyl moiety of threonylcarbamoyl-AMP (TC-AMP) to the N6 group of A37. The polypeptide is tRNA N6-adenosine threonylcarbamoyltransferase (Ignicoccus hospitalis (strain KIN4/I / DSM 18386 / JCM 14125)).